We begin with the raw amino-acid sequence, 470 residues long: Ribulose bisphosphate carboxylase large chain (470 aa).

Substrate contacts are provided by Asn-118 and Thr-168. The active-site Proton acceptor is Lys-170. Lys-172 is a substrate binding site. Mg(2+) is bound by residues Lys-196, Asp-198, and Glu-199. An N6-carboxylysine modification is found at Lys-196. His-289 (proton acceptor) is an active-site residue. Substrate is bound by residues Arg-290, His-322, and Ser-374.

The protein belongs to the RuBisCO large chain family. Type I subfamily. Heterohexadecamer of 8 large chains and 8 small chains; disulfide-linked. The disulfide link is formed within the large subunit homodimers. RuBisCO interacts with the C-terminus of CcmM, and can be found in complexes that also include carbonic anhydrase (ccaA). RuBisCO associates with both the internal and shell portion of carboxysomes. The cofactor is Mg(2+). In terms of processing, the disulfide bond which can form in the large chain dimeric partners within the hexadecamer appears to be associated with oxidative stress and protein turnover.

Its subcellular location is the carboxysome. The catalysed reaction is 2 (2R)-3-phosphoglycerate + 2 H(+) = D-ribulose 1,5-bisphosphate + CO2 + H2O. It catalyses the reaction D-ribulose 1,5-bisphosphate + O2 = 2-phosphoglycolate + (2R)-3-phosphoglycerate + 2 H(+). Functionally, ruBisCO catalyzes two reactions: the carboxylation of D-ribulose 1,5-bisphosphate, the primary event in carbon dioxide fixation, as well as the oxidative fragmentation of the pentose substrate in the photorespiration process. Both reactions occur simultaneously and in competition at the same active site. In Synechocystis sp. (strain ATCC 27184 / PCC 6803 / Kazusa), this protein is Ribulose bisphosphate carboxylase large chain.